The primary structure comprises 106 residues: Urease subunit beta (106 aa).

This sequence belongs to the urease beta subunit family. Heterotrimer of UreA (gamma), UreB (beta) and UreC (alpha) subunits. Three heterotrimers associate to form the active enzyme.

The protein resides in the cytoplasm. It catalyses the reaction urea + 2 H2O + H(+) = hydrogencarbonate + 2 NH4(+). It participates in nitrogen metabolism; urea degradation; CO(2) and NH(3) from urea (urease route): step 1/1. The polypeptide is Urease subunit beta (Prochlorococcus marinus (strain MIT 9215)).